The primary structure comprises 174 residues: Ribosome maturation factor RimM (174 aa).

Residues 98–171 form the PRC barrel domain; the sequence is EGEFYFHQII…TIHIEVMEGL (74 aa).

The protein belongs to the RimM family. In terms of assembly, binds ribosomal protein uS19.

It localises to the cytoplasm. Functionally, an accessory protein needed during the final step in the assembly of 30S ribosomal subunit, possibly for assembly of the head region. Essential for efficient processing of 16S rRNA. May be needed both before and after RbfA during the maturation of 16S rRNA. It has affinity for free ribosomal 30S subunits but not for 70S ribosomes. In Bacillus pumilus (strain SAFR-032), this protein is Ribosome maturation factor RimM.